The chain runs to 327 residues: Dolichyl-phosphate beta-glucosyltransferase (327 aa).

The Lumenal portion of the chain corresponds to 1 to 15; that stretch reads MIDLFINIASFTIYG. A helical transmembrane segment spans residues 16–36; it reads IPVIPLFIIVFVILSYYLLLL. Over 37 to 327 the chain is Cytoplasmic; sequence HDESPLWLEK…YLLGIWKIKS (291 aa).

This sequence belongs to the glycosyltransferase 2 family.

It localises to the endoplasmic reticulum membrane. The catalysed reaction is a di-trans,poly-cis-dolichyl phosphate + UDP-alpha-D-glucose = a di-trans,poly-cis-dolichyl beta-D-glucosyl phosphate + UDP. Its pathway is protein modification; protein glycosylation. In terms of biological role, endoplasmic reticulum membrane-bound UDP-glucose:dolichyl-phosphate glucosyltransferase involved in protein N-linked glycosylation. The polypeptide is Dolichyl-phosphate beta-glucosyltransferase (alg5) (Dictyostelium discoideum (Social amoeba)).